The primary structure comprises 183 residues: MNEARARIIINLRLSMDSLMRVFSHRSPPPSFGFACDVGAHPSSTAQNLPMTYGSVREMIDDFSIVFGVPKYRTSKPKKVTRKFSFTRLLQPIDNLVTCPACSNIHPSDTICDACYAKVHQLTSEIKKKMMQYNPYVGEKQDKEVYVKFRGEPDAPAAVVKGKRVLEIEKERPTWFKKLTLKE.

4 residues coordinate Zn(2+): C99, C102, C112, and C115.

Belongs to the bacterial ribosomal protein bL32 family. In terms of assembly, component of the mitochondrial large ribosomal subunit (mt-LSU).

It is found in the mitochondrion. Component of the mitochondrial large ribosomal subunit (mt-LSU). The mitochondrial ribosome (mitoribosome) is a large ribonucleoprotein complex responsible for the synthesis of proteins inside mitochondria. This chain is Large ribosomal subunit protein bL32m (mrpl-32), found in Caenorhabditis elegans.